The sequence spans 427 residues: Mitochondrial distribution and morphology protein 12 (427 aa).

Residues 1 to 387 (MSFDINWNQL…WPSWICIDMN (387 aa)) enclose the SMP-LTD domain. The span at 81 to 96 (NDSKDEHLKNHGDGIN) shows a compositional bias: basic and acidic residues. Disordered regions lie at residues 81-168 (NDSK…APPL) and 387-427 (NDDD…EAGE). A compositionally biased stretch (acidic residues) spans 106–133 (LDDEDEDDEDDDEDDEDEEEEDEDDYDD). The segment covering 146 to 161 (LNFNENSTTPSANSFA) has biased composition (polar residues). Acidic residues predominate over residues 387-402 (NDDDDEEEEEESEDND). The span at 411–427 (NDGKHGDGRTDETEAGE) shows a compositional bias: basic and acidic residues.

This sequence belongs to the MDM12 family. In terms of assembly, component of the ER-mitochondria encounter structure (ERMES) or MDM complex, composed of MMM1, MDM10, MDM12 and MDM34. An MMM1 homodimer associates with one molecule of MDM12 on each side in a pairwise head-to-tail manner, and the SMP-LTD domains of MMM1 and MDM12 generate a continuous hydrophobic tunnel for phospholipid trafficking.

Its subcellular location is the mitochondrion outer membrane. The protein localises to the endoplasmic reticulum membrane. Its function is as follows. Component of the ERMES/MDM complex, which serves as a molecular tether to connect the endoplasmic reticulum (ER) and mitochondria. Components of this complex are involved in the control of mitochondrial shape and protein biogenesis, and function in nonvesicular lipid trafficking between the ER and mitochondria. MDM12 is required for the interaction of the ER-resident membrane protein MMM1 and the outer mitochondrial membrane-resident beta-barrel protein MDM10. The MDM12-MMM1 subcomplex functions in the major beta-barrel assembly pathway that is responsible for biogenesis of all mitochondrial outer membrane beta-barrel proteins, and acts in a late step after the SAM complex. The MDM10-MDM12-MMM1 subcomplex further acts in the TOM40-specific pathway after the action of the MDM12-MMM1 complex. Essential for establishing and maintaining the structure of mitochondria and maintenance of mtDNA nucleoids. The sequence is that of Mitochondrial distribution and morphology protein 12 from Candida albicans (strain WO-1) (Yeast).